The sequence spans 276 residues: Large ribosomal subunit protein uL2 (276 aa).

The disordered stretch occupies residues 224–276; the sequence is VAMNPVDHPHGGGEGKTGEGRVPVSPWGTPTKGYRTRRNKRTTSMIVQRRQKR. Positions 230–242 are enriched in basic and acidic residues; that stretch reads DHPHGGGEGKTGE.

It belongs to the universal ribosomal protein uL2 family. As to quaternary structure, part of the 50S ribosomal subunit. Forms a bridge to the 30S subunit in the 70S ribosome.

Its function is as follows. One of the primary rRNA binding proteins. Required for association of the 30S and 50S subunits to form the 70S ribosome, for tRNA binding and peptide bond formation. It has been suggested to have peptidyltransferase activity; this is somewhat controversial. Makes several contacts with the 16S rRNA in the 70S ribosome. The protein is Large ribosomal subunit protein uL2 of Polynucleobacter asymbioticus (strain DSM 18221 / CIP 109841 / QLW-P1DMWA-1) (Polynucleobacter necessarius subsp. asymbioticus).